The sequence spans 186 residues: Alkyl hydroperoxide reductase AhpD (186 aa).

The active-site Proton donor is C132. C132 and C135 are oxidised to a cystine. C135 functions as the Cysteine sulfenic acid (-SOH) intermediate in the catalytic mechanism.

Belongs to the AhpD family.

The catalysed reaction is N(6)-[(R)-dihydrolipoyl]-L-lysyl-[lipoyl-carrier protein] + a hydroperoxide = N(6)-[(R)-lipoyl]-L-lysyl-[lipoyl-carrier protein] + an alcohol + H2O. Antioxidant protein with alkyl hydroperoxidase activity. Required for the reduction of the AhpC active site cysteine residues and for the regeneration of the AhpC enzyme activity. The sequence is that of Alkyl hydroperoxide reductase AhpD from Anaeromyxobacter dehalogenans (strain 2CP-C).